The chain runs to 534 residues: Inosine-5'-monophosphate dehydrogenase (534 aa).

CBS domains follow at residues 117–181 (YVMQ…GTPI) and 190–255 (TTPI…PMAS). NAD(+) is bound by residues 292–294 (DSS) and 342–344 (GMG). G344 and G346 together coordinate K(+). S347 contributes to the IMP binding site. Residue C349 coordinates K(+). Residue C349 is the Thioimidate intermediate of the active site. Residues 382-384 (DGG), 405-406 (GG), and 430-434 (YRGMG) contribute to the IMP site. R448 functions as the Proton acceptor in the catalytic mechanism. IMP is bound at residue Q461. K(+)-binding residues include E520, G521, and G522.

This sequence belongs to the IMPDH/GMPR family. In terms of assembly, homotetramer. The cofactor is K(+).

Its subcellular location is the cytoplasm. The enzyme catalyses IMP + NAD(+) + H2O = XMP + NADH + H(+). It participates in purine metabolism; XMP biosynthesis via de novo pathway; XMP from IMP: step 1/1. Mycophenolic acid (MPA) is a non-competitive inhibitor that prevents formation of the closed enzyme conformation by binding to the same site as the amobile flap. In contrast, mizoribine monophosphate (MZP) is a competitive inhibitor that induces the closed conformation. MPA is a potent inhibitor of mammalian IMPDHs but a poor inhibitor of the bacterial enzymes. MZP is a more potent inhibitor of bacterial IMPDH. Its function is as follows. Catalyzes the conversion of inosine 5'-phosphate (IMP) to xanthosine 5'-phosphate (XMP), the first committed and rate-limiting step in the de novo synthesis of guanine nucleotides, and therefore plays an important role in the regulation of cell growth. The sequence is that of Inosine-5'-monophosphate dehydrogenase from Caenorhabditis elegans.